Consider the following 246-residue polypeptide: Probable phosphatase AHA_1344 (246 aa).

Residues histidine 8, histidine 10, histidine 16, histidine 41, glutamate 74, histidine 102, histidine 132, aspartate 193, and histidine 195 each coordinate Zn(2+).

It belongs to the PHP family. Zn(2+) serves as cofactor.

The sequence is that of Probable phosphatase AHA_1344 from Aeromonas hydrophila subsp. hydrophila (strain ATCC 7966 / DSM 30187 / BCRC 13018 / CCUG 14551 / JCM 1027 / KCTC 2358 / NCIMB 9240 / NCTC 8049).